The sequence spans 218 residues: Ribose-5-phosphate isomerase A (218 aa).

Substrate-binding positions include 28–31, 81–84, and 94–97; these read TGST, DSAD, and KGKG. Catalysis depends on Glu103, which acts as the Proton acceptor. Residue Lys121 coordinates substrate.

This sequence belongs to the ribose 5-phosphate isomerase family. As to quaternary structure, homodimer.

The catalysed reaction is aldehydo-D-ribose 5-phosphate = D-ribulose 5-phosphate. Its pathway is carbohydrate degradation; pentose phosphate pathway; D-ribose 5-phosphate from D-ribulose 5-phosphate (non-oxidative stage): step 1/1. Functionally, catalyzes the reversible conversion of ribose-5-phosphate to ribulose 5-phosphate. The chain is Ribose-5-phosphate isomerase A from Blochmanniella pennsylvanica (strain BPEN).